Reading from the N-terminus, the 954-residue chain is MIAREEPATTFARRHIGPSSRDIAAMLETVGAKSLEALMNEALPPSIRQKTPLDLGEGFSETEVLTHMQALAAQNQPLTSLIGQGYSGTILPAVIQRNILENPAWYTAYTPYQPEISQGRLEALFNFQTMICDLTGLDVANASLLDEATAAAEAMALAERASSVKTKAFFVDHEVHPQTLAVLRTRAEPLGWTLVTGDPLHDLDKADVFGAVLQYPGTSGVVRDLRPAIAAIKAKGGLAVVAADLLALTLLTSPGVLGADIAIGSAQRFGVPMGYGGPHAAYMAVCNALKRLLPGRLVGLSVDSRGTPAYRLALQTREQHIRREKATSNICTAQVLLAVISSMYAVYHGPEGLAQIARTVHRHTATLAAGLTRLGFAPLNSTAFDTLTVNAGERQSEIVKRASSQGINLRINADGTLGIALDELTIEETVEALWRAFGATWSYADVEAHAPDLLPADLKRKTAYLTHPVFHEHRSETELLRYMRKLSDRDLALDRAMIPLGSCTMKLNATTEMIPLTWAAFANLHPFAPPEQAEGYFTLFENFEEWLLDITGYDAISLQPNSGAQGEYAGLLAIRGYHAARGESHRTVCLIPSSAHGTNPASANMAGMDVVVVACDARGDVDVDDLRTKSTQHADRLAAIMITYPSTHGVFEERIREICDIVHGHGGQVYLDGANMNAQVGLSRPGDYGADVSHLNLHKTFCIPHGGGGPGMGPIGVKAHLAPFLPGHPAIDDATPSAVGPVSAAPFGSASILTISYIYILMMGSEGLKRATEVAILNANYIAQRLDPHFPVLYRNVKGRVAHECIIDPRALKAKTGVTVDDIAKRLIDYGFHAPTMSFPVPGTLMIEPTESESKAELDRFCDAMIAIRQEIAEIEAGRWKVEASPLRHAPHTAHDIADDAWSRPYSRAQGCFPSGSSRSDKYWCPVGRVDNAYGDRNLVCSCPPVEDYAQAAE.

Lysine 699 bears the N6-(pyridoxal phosphate)lysine mark.

It belongs to the GcvP family. As to quaternary structure, the glycine cleavage system is composed of four proteins: P, T, L and H. Requires pyridoxal 5'-phosphate as cofactor.

The enzyme catalyses N(6)-[(R)-lipoyl]-L-lysyl-[glycine-cleavage complex H protein] + glycine + H(+) = N(6)-[(R)-S(8)-aminomethyldihydrolipoyl]-L-lysyl-[glycine-cleavage complex H protein] + CO2. Its function is as follows. The glycine cleavage system catalyzes the degradation of glycine. The P protein binds the alpha-amino group of glycine through its pyridoxal phosphate cofactor; CO(2) is released and the remaining methylamine moiety is then transferred to the lipoamide cofactor of the H protein. The protein is Glycine dehydrogenase (decarboxylating) of Nitrobacter winogradskyi (strain ATCC 25391 / DSM 10237 / CIP 104748 / NCIMB 11846 / Nb-255).